Consider the following 313-residue polypeptide: Porphobilinogen deaminase (313 aa).

C241 carries the post-translational modification S-(dipyrrolylmethanemethyl)cysteine.

Belongs to the HMBS family. As to quaternary structure, monomer. The cofactor is dipyrromethane.

The catalysed reaction is 4 porphobilinogen + H2O = hydroxymethylbilane + 4 NH4(+). It functions in the pathway porphyrin-containing compound metabolism; protoporphyrin-IX biosynthesis; coproporphyrinogen-III from 5-aminolevulinate: step 2/4. The protein operates within porphyrin-containing compound metabolism; chlorophyll biosynthesis. In terms of biological role, tetrapolymerization of the monopyrrole PBG into the hydroxymethylbilane pre-uroporphyrinogen in several discrete steps. The protein is Porphobilinogen deaminase of Chlorobium chlorochromatii (strain CaD3).